Consider the following 196-residue polypeptide: MSFAEKLTGLMARPNQQDPAGGPEQPWYLKYGSRVLGIVAAFFAILFGLWNVLSIIGLSVSCLVAGIIQMLAGFVVMALEAPCCFICIEKVGSVADMMDTKPLYFRAGLYCAMAVPPIFMCFGLASLFGSGLIFATGAVYGMMALGKKASAAEMRAAAQQASYGGNAAPTTNDRAGIVNNAQPFSFTGAVGTDSNV.

Helical transmembrane passes span 36–56 (LGIV…LSII), 67–89 (IIQM…ICIE), and 114–134 (AVPP…GLIF).

The protein belongs to the calcium channel flower family. As to quaternary structure, homomultimer. Associates with the dally/ magu complex.

It localises to the cell membrane. The protein resides in the cytoplasmic vesicle. The protein localises to the secretory vesicle. It is found in the synaptic vesicle membrane. Its subcellular location is the presynaptic cell membrane. It localises to the endosome. Channel activity is inhibited by La(3+), which reduces Ca(2+) influx and thus inhibits it's function in promoting activity-dependent bulk endocytosis (ADBE) in response to high stimuli. Its function is as follows. Transmembrane protein which mediates synaptic endocytosis, fitness-based cell culling, neuronal culling, morphogen gradient scaling, and calcium transport. Regulates synaptic endocytosis and hence couples exo- with endocytosis. Controls two major modes of synaptic vesicle (SV) endocytosis in the synaptic boutons of neuromuscular junctions (NMJs); Ca(2+) channel-independent Clathrin-mediated endocytosis (CME) in response to mild stimulation, and Ca(2+) channel-dependent activity-dependent bulk endocytosis (ADBE) in response to strong stimulation. Functions in ADBE and subsequent SV reformation from bulk endosomes by initiating Ca(2+) channel-dependent phosphatidylinositol 4,5-bisphosphate (PtdIns(4,5)P2) compartmentalization in synaptic boutons. There it acts at the periactive zone to provide the low Ca(2+) levels required to initiate Calcineurin activation and upregulate PtdIns(4,5)P2. Conversely PtdIns(4,5)P2 enhances fwe Ca(2+) channel-activity, establishing a positive feedback loop that induces PtdIns(4,5)P2 microdomain at the periactive zone. These microdomains trigger bulk membrane invagination (i.e. ADBE) by triggering actin polymerization while also promoting localization of fwe to bulk endosomes, thereby removing the ADBE trigger to reduce endocytosis and prevent excess membrane uptake. PtdIns(4,5)P2 then promotes SV reformation from the bulk endosomes, to coordinate ADBE and subsequent SV reformation. Different combinations of the flower isoforms at the cell membrane are also required for the identification and elimination of suboptimal or supernumerary cells during development, regeneration, and adulthood. Required for the recognition and elimination of unfit cells in the developing wing during cell competition. In the developing pupal retina, mediates the elimination of unwanted postmitotic neurons, including supernumerary photoreceptor neurons that form at the periphery of the retina and are contained within incomplete ommatidia units. Also required for efficient elimination and replacement of old neurons by newly generated neurons during regeneration in the adult brain following mechanical injury. Downstream of the flower fitness fingerprints, cells identified as unwanted or unfit are eliminated via apoptosis through the expression of ahuizotl (azot). However, the cells marked for elimination by the flower isoforms only undergo apoptosis if additional thresholds are met; (1) their neighboring fit/healthy cells express different levels of the fwe isoforms, and (2) the levels of the protective signal SPARC expressed by the loser or unwanted cells are unable to inhibit caspase activation. These additional thresholds for flower-mediated apoptosis, allows useful cells to recover from transient and limited stress before they are unnecessarily eliminated. Functions with dally and magu in a mechanism of scaling, which utilises apoptosis to ensure that the dpp morphogen gradient, which mediates organ growth, remains proportional to the size of the growing wing. In this mechanism, fwe represses dally- and Magu-dependent activity in expanding the gradient, and dally/Magu inhibits fwe-dependent apoptosis to keep cell death rate low. When the levels of these different proteins are optimally regulated the gradient correctly scales with organ growth but when this fails, fwe-mediated apoptosis is activated to trim the developing tissue to match the correct size of the gradient. This is Calcium channel flower from Drosophila virilis (Fruit fly).